Here is a 430-residue protein sequence, read N- to C-terminus: Enolase (430 aa).

(2R)-2-phosphoglycerate is bound at residue Gln-165. The active-site Proton donor is the Glu-207. 3 residues coordinate Mg(2+): Asp-244, Glu-287, and Asp-314. 4 residues coordinate (2R)-2-phosphoglycerate: Lys-339, Arg-368, Ser-369, and Lys-390. Lys-339 functions as the Proton acceptor in the catalytic mechanism.

The protein belongs to the enolase family. As to quaternary structure, component of the RNA degradosome, a multiprotein complex involved in RNA processing and mRNA degradation. The cofactor is Mg(2+).

It is found in the cytoplasm. It localises to the secreted. Its subcellular location is the cell surface. It carries out the reaction (2R)-2-phosphoglycerate = phosphoenolpyruvate + H2O. The protein operates within carbohydrate degradation; glycolysis; pyruvate from D-glyceraldehyde 3-phosphate: step 4/5. Functionally, catalyzes the reversible conversion of 2-phosphoglycerate (2-PG) into phosphoenolpyruvate (PEP). It is essential for the degradation of carbohydrates via glycolysis. This Xanthomonas oryzae pv. oryzae (strain MAFF 311018) protein is Enolase.